We begin with the raw amino-acid sequence, 292 residues long: NADH-cytochrome b5 reductase 1 (292 aa).

Residues 12-32 (ALLVVGTAIFAVLVGAKFLGG) traverse the membrane as a helical segment. In terms of domain architecture, FAD-binding FR-type spans 43 to 148 (TEFQNFVLKE…RGPKGAMVYT (106 aa)). FAD contacts are provided by residues 128–143 (TTLK…GPKG) and 154–191 (HIGM…QVDL).

This sequence belongs to the flavoprotein pyridine nucleotide cytochrome reductase family. Monomer. Component of the 2-(3-amino-3-carboxypropyl)histidine synthase complex composed of dph1, dph2, dph3 and a NADH-dependent reductase, predominantly cbr1. Requires FAD as cofactor.

It localises to the mitochondrion outer membrane. It catalyses the reaction 2 Fe(III)-[cytochrome b5] + NADH = 2 Fe(II)-[cytochrome b5] + NAD(+) + H(+). The catalysed reaction is 2 Fe(3+)-[Dph3] + NADH = 2 Fe(2+)-[Dph3] + NAD(+) + H(+). It functions in the pathway protein modification; peptidyl-diphthamide biosynthesis. Its function is as follows. NADH-dependent reductase for dph3 and cytochrome b5. Required for the first step of diphthamide biosynthesis, a post-translational modification of histidine which occurs in elongation factor 2. Dph1 and dph2 transfer a 3-amino-3-carboxypropyl (ACP) group from S-adenosyl-L-methionine (SAM) to a histidine residue, the reaction is assisted by a reduction system comprising dph3 and a NADH-dependent reductase, predominantly cbr1. By reducing dph3, also involved in the formation of the tRNA wobble base modification mcm5s 2U (5-methoxycarbonylmethyl-2-thiouridine), mediated by the elongator complex. The cytochrome b5/NADH cytochrome b5 reductase electron transfer system supports the catalytic activity of several sterol biosynthetic enzymes. The chain is NADH-cytochrome b5 reductase 1 (cbr1) from Aspergillus oryzae (strain ATCC 42149 / RIB 40) (Yellow koji mold).